The following is a 412-amino-acid chain: Gamma-glutamyl phosphate reductase (412 aa).

It belongs to the gamma-glutamyl phosphate reductase family.

It localises to the cytoplasm. It catalyses the reaction L-glutamate 5-semialdehyde + phosphate + NADP(+) = L-glutamyl 5-phosphate + NADPH + H(+). It functions in the pathway amino-acid biosynthesis; L-proline biosynthesis; L-glutamate 5-semialdehyde from L-glutamate: step 2/2. Catalyzes the NADPH-dependent reduction of L-glutamate 5-phosphate into L-glutamate 5-semialdehyde and phosphate. The product spontaneously undergoes cyclization to form 1-pyrroline-5-carboxylate. This chain is Gamma-glutamyl phosphate reductase, found in Bartonella bacilliformis (strain ATCC 35685 / KC583 / Herrer 020/F12,63).